A 566-amino-acid chain; its full sequence is Medium-chain fatty-acid--CoA ligase (566 aa).

ATP is bound at residue 231 to 242 (ILASERAYCARL).

This sequence belongs to the ATP-dependent AMP-binding enzyme family. Homodimer. Requires Mg(2+) as cofactor.

It is found in the cell membrane. The catalysed reaction is hexanoate + ATP + CoA = hexanoyl-CoA + AMP + diphosphate. It catalyses the reaction octanoate + ATP + CoA = octanoyl-CoA + AMP + diphosphate. The enzyme catalyses dodecanoate + ATP + CoA = dodecanoyl-CoA + AMP + diphosphate. It participates in lipid metabolism; fatty acid beta-oxidation. In terms of biological role, catalyzes the esterification, concomitant with transport, of exogenous fatty acids into metabolically active CoA thioesters for subsequent degradation or incorporation into phospholipids. Is maximally active on C6:0, C8:0 and C12:0 fatty acids, while has a low activity on C14-C18 chain length fatty acids. Is involved in the anaerobic beta-oxidative degradation of fatty acids, which allows anaerobic growth of E.coli on fatty acids as a sole carbon and energy source in the presence of nitrate or fumarate as a terminal electron acceptor. Can functionally replace FadD under anaerobic conditions. In Escherichia coli (strain K12), this protein is Medium-chain fatty-acid--CoA ligase.